Here is a 179-residue protein sequence, read N- to C-terminus: Large ribosomal subunit protein uL5 (179 aa).

Belongs to the universal ribosomal protein uL5 family. Part of the 50S ribosomal subunit; part of the 5S rRNA/L5/L18/L25 subcomplex. Contacts the 5S rRNA and the P site tRNA. Forms a bridge to the 30S subunit in the 70S ribosome.

In terms of biological role, this is one of the proteins that bind and probably mediate the attachment of the 5S RNA into the large ribosomal subunit, where it forms part of the central protuberance. In the 70S ribosome it contacts protein S13 of the 30S subunit (bridge B1b), connecting the 2 subunits; this bridge is implicated in subunit movement. Contacts the P site tRNA; the 5S rRNA and some of its associated proteins might help stabilize positioning of ribosome-bound tRNAs. The chain is Large ribosomal subunit protein uL5 from Pasteurella multocida (strain Pm70).